The chain runs to 799 residues: Disintegrin and metalloproteinase domain-containing protein B (799 aa).

An N-terminal signal peptide occupies residues 1–23 (MKAFSCLLSVIATAASLFQHVDA). Over 24–707 (RSHARDKLNN…VSDWVSRHKP (684 aa)) the chain is Extracellular. Asparagine 33, asparagine 227, asparagine 228, asparagine 314, and asparagine 408 each carry an N-linked (GlcNAc...) asparagine glycan. One can recognise a Peptidase M12B domain in the interval 272-511 (KVALIGVVAD…RTILTSCLTT (240 aa)). Disulfide bonds link cysteine 396–cysteine 496, cysteine 449–cysteine 460, and cysteine 581–cysteine 601. Histidine 432 contributes to the Zn(2+) binding site. Residue glutamate 433 is part of the active site. Residues histidine 436 and histidine 442 each coordinate Zn(2+). Positions 520–609 (GQQCGNGIVE…DCPHDIHSKD (90 aa)) constitute a Disintegrin domain. The chain crosses the membrane as a helical span at residues 708–728 (IVIGVAVGAGCLLLLAIASCI). The Cytoplasmic portion of the chain corresponds to 729–799 (CGRSRRQRPR…PGHLPSTRYA (71 aa)). The segment at 753–799 (VYNGWNGAPPNAQQSSPGGHPPYNNIPPPINAPPPAYPGHLPSTRYA) is disordered. Residues 776-789 (NNIPPPINAPPPAY) are compositionally biased toward pro residues.

Requires Zn(2+) as cofactor.

Its subcellular location is the membrane. Its function is as follows. Probable zinc protease. The sequence is that of Disintegrin and metalloproteinase domain-containing protein B (ADM-B) from Arthroderma benhamiae (strain ATCC MYA-4681 / CBS 112371) (Trichophyton mentagrophytes).